A 135-amino-acid polypeptide reads, in one-letter code: Ribosome-binding factor A (135 aa).

This sequence belongs to the RbfA family. Monomer. Binds 30S ribosomal subunits, but not 50S ribosomal subunits or 70S ribosomes.

The protein localises to the cytoplasm. Functionally, one of several proteins that assist in the late maturation steps of the functional core of the 30S ribosomal subunit. Associates with free 30S ribosomal subunits (but not with 30S subunits that are part of 70S ribosomes or polysomes). Required for efficient processing of 16S rRNA. May interact with the 5'-terminal helix region of 16S rRNA. This Hyphomonas neptunium (strain ATCC 15444) protein is Ribosome-binding factor A.